The following is a 421-amino-acid chain: 4-hydroxy-3-methylbut-2-en-1-yl diphosphate synthase (flavodoxin) (421 aa).

The tract at residues 1–20 (MHDAVTRPTPPSDATSWPRR) is disordered. Cysteine 311, cysteine 314, cysteine 357, and glutamate 364 together coordinate [4Fe-4S] cluster.

It belongs to the IspG family. The cofactor is [4Fe-4S] cluster.

The enzyme catalyses (2E)-4-hydroxy-3-methylbut-2-enyl diphosphate + oxidized [flavodoxin] + H2O + 2 H(+) = 2-C-methyl-D-erythritol 2,4-cyclic diphosphate + reduced [flavodoxin]. The protein operates within isoprenoid biosynthesis; isopentenyl diphosphate biosynthesis via DXP pathway; isopentenyl diphosphate from 1-deoxy-D-xylulose 5-phosphate: step 5/6. Functionally, converts 2C-methyl-D-erythritol 2,4-cyclodiphosphate (ME-2,4cPP) into 1-hydroxy-2-methyl-2-(E)-butenyl 4-diphosphate. The polypeptide is 4-hydroxy-3-methylbut-2-en-1-yl diphosphate synthase (flavodoxin) (Stenotrophomonas maltophilia (strain R551-3)).